The chain runs to 208 residues: Uracil phosphoribosyltransferase (208 aa).

Residues Arg-78, Arg-103, and 130–138 (DPMLATGGS) each bind 5-phospho-alpha-D-ribose 1-diphosphate. Uracil is bound by residues Ile-193 and 198–200 (GDA). Asp-199 is a 5-phospho-alpha-D-ribose 1-diphosphate binding site.

It belongs to the UPRTase family. The cofactor is Mg(2+).

It carries out the reaction UMP + diphosphate = 5-phospho-alpha-D-ribose 1-diphosphate + uracil. The protein operates within pyrimidine metabolism; UMP biosynthesis via salvage pathway; UMP from uracil: step 1/1. With respect to regulation, allosterically activated by GTP. In terms of biological role, catalyzes the conversion of uracil and 5-phospho-alpha-D-ribose 1-diphosphate (PRPP) to UMP and diphosphate. In Haemophilus influenzae (strain PittEE), this protein is Uracil phosphoribosyltransferase.